The chain runs to 213 residues: Protein-L-isoaspartate O-methyltransferase (213 aa).

Ser64 is a catalytic residue.

It belongs to the methyltransferase superfamily. L-isoaspartyl/D-aspartyl protein methyltransferase family.

The protein localises to the cytoplasm. The catalysed reaction is [protein]-L-isoaspartate + S-adenosyl-L-methionine = [protein]-L-isoaspartate alpha-methyl ester + S-adenosyl-L-homocysteine. Its function is as follows. Catalyzes the methyl esterification of L-isoaspartyl residues in peptides and proteins that result from spontaneous decomposition of normal L-aspartyl and L-asparaginyl residues. It plays a role in the repair and/or degradation of damaged proteins. The chain is Protein-L-isoaspartate O-methyltransferase from Flavobacterium psychrophilum (strain ATCC 49511 / DSM 21280 / CIP 103535 / JIP02/86).